The following is a 376-amino-acid chain: Protein-tyrosine sulfotransferase 2 (376 aa).

The Cytoplasmic portion of the chain corresponds to 1-8 (MRLSVRKV). The chain crosses the membrane as a helical; Signal-anchor for type II membrane protein span at residues 9–25 (LLAAGCALALVLAVQLG). Residues 26 to 376 (QQVLECRAVL…NSTSPHLGSS (351 aa)) lie on the Lumenal side of the membrane. 77-81 (RSGTT) lines the 3'-phosphoadenylyl sulfate pocket. Cys-95 and Cys-155 form a disulfide bridge. Glu-98 (proton donor/acceptor) is an active-site residue. The interval 100 to 104 (RIIPR) is interaction with peptide substrate. Residues Arg-182, Ser-190, and Arg-194 each coordinate 3'-phosphoadenylyl sulfate. Cysteines 224 and 232 form a disulfide. 3'-phosphoadenylyl sulfate is bound by residues Tyr-237, 284-293 (STDQVIKPVN), and Lys-299. N-linked (GlcNAc...) asparagine glycans are attached at residues Asn-342 and Asn-367.

Belongs to the protein sulfotransferase family. Homodimer. Can also form heterodimers with TPST1. N-glycosylated. As to expression, widely expressed.

It is found in the golgi apparatus membrane. The enzyme catalyses L-tyrosyl-[protein] + 3'-phosphoadenylyl sulfate = O-sulfo-L-tyrosine-[protein] + adenosine 3',5'-bisphosphate + H(+). In terms of biological role, catalyzes the O-sulfation of tyrosine residues within acidic motifs of polypeptides, using 3'-phosphoadenylyl sulfate (PAPS) as cosubstrate. The chain is Protein-tyrosine sulfotransferase 2 (Tpst2) from Mus musculus (Mouse).